Reading from the N-terminus, the 120-residue chain is NAD(P)H-quinone oxidoreductase subunit 3, chloroplastic (120 aa).

The next 3 helical transmembrane spans lie at 9 to 29 (IFWAFLMISSVIPILAFLISG), 64 to 84 (MFALVFVVFDVETVFLYPWAM), and 88 to 108 (VLGVSAFIEALIFVLIPIVGS).

Belongs to the complex I subunit 3 family. In terms of assembly, NDH is composed of at least 16 different subunits, 5 of which are encoded in the nucleus.

Its subcellular location is the plastid. It is found in the chloroplast thylakoid membrane. It catalyses the reaction a plastoquinone + NADH + (n+1) H(+)(in) = a plastoquinol + NAD(+) + n H(+)(out). The catalysed reaction is a plastoquinone + NADPH + (n+1) H(+)(in) = a plastoquinol + NADP(+) + n H(+)(out). In terms of biological role, NDH shuttles electrons from NAD(P)H:plastoquinone, via FMN and iron-sulfur (Fe-S) centers, to quinones in the photosynthetic chain and possibly in a chloroplast respiratory chain. The immediate electron acceptor for the enzyme in this species is believed to be plastoquinone. Couples the redox reaction to proton translocation, and thus conserves the redox energy in a proton gradient. In Illicium oligandrum (Star anise), this protein is NAD(P)H-quinone oxidoreductase subunit 3, chloroplastic.